The chain runs to 1239 residues: Inner tegument protein (1239 aa).

Residues Met1–Ser10 show a composition bias toward low complexity. Disordered regions lie at residues Met1–Pro20, Gly672–Trp708, and Gly1090–Glu1239. An interaction with large tegument protein region spans residues Asn618–Glu1239. The span at Asp1115–Phe1126 shows a compositional bias: low complexity. Residues Ser1127–Glu1136 show a composition bias toward acidic residues. The segment covering Arg1181–Ala1190 has biased composition (low complexity). The segment covering Val1219–Pro1232 has biased composition (basic residues).

It belongs to the herpesviridae inner tegument protein family. Interacts (via C-terminus) with the large tegument protein/LTP (via N-terminus).

It is found in the virion tegument. It localises to the host cytoplasm. The protein resides in the host nucleus. Its subcellular location is the host Golgi apparatus. The protein localises to the host trans-Golgi network. In terms of biological role, plays an essential role in cytoplasmic secondary envelopment during viral egress. Interacts with the capsid via the large tegument protein/LTP and participates in its transport to the host trans-Golgi network (TGN) where secondary envelopment occurs. Modulates tegumentation and capsid accumulation at the viral assembly complex. The polypeptide is Inner tegument protein (Homo sapiens (Human)).